A 302-amino-acid chain; its full sequence is Oxygen-dependent coproporphyrinogen-III oxidase (302 aa).

Residue serine 94 participates in substrate binding. Histidine 98 and histidine 108 together coordinate a divalent metal cation. Catalysis depends on histidine 108, which acts as the Proton donor. 110-112 (NVR) is a binding site for substrate. Residues histidine 147 and histidine 177 each coordinate a divalent metal cation. An important for dimerization region spans residues 242–277 (YVEFNLVYDRGTLFGLQTGGRTESILMSMPPLVRWQ). 260 to 262 (GGR) serves as a coordination point for substrate.

This sequence belongs to the aerobic coproporphyrinogen-III oxidase family. Homodimer. A divalent metal cation serves as cofactor.

It localises to the cytoplasm. The enzyme catalyses coproporphyrinogen III + O2 + 2 H(+) = protoporphyrinogen IX + 2 CO2 + 2 H2O. Its pathway is porphyrin-containing compound metabolism; protoporphyrin-IX biosynthesis; protoporphyrinogen-IX from coproporphyrinogen-III (O2 route): step 1/1. Its function is as follows. Involved in the heme biosynthesis. Catalyzes the aerobic oxidative decarboxylation of propionate groups of rings A and B of coproporphyrinogen-III to yield the vinyl groups in protoporphyrinogen-IX. In Shewanella sp. (strain ANA-3), this protein is Oxygen-dependent coproporphyrinogen-III oxidase.